A 719-amino-acid chain; its full sequence is Phosphoribosylformylglycinamidine synthase subunit PurL (719 aa).

The active site involves His45. Residues Tyr48 and Lys87 each coordinate ATP. Position 89 (Glu89) interacts with Mg(2+). Residues 90–93 and Arg112 each bind substrate; that span reads SHNH. Residue His91 is the Proton acceptor of the active site. Asp113 contributes to the Mg(2+) binding site. Gln236 lines the substrate pocket. Asp264 is a binding site for Mg(2+). 308 to 310 contacts substrate; the sequence is ESQ. Residues Asn493 and Gly530 each coordinate ATP. Asn531 lines the Mg(2+) pocket. Ser533 lines the substrate pocket.

This sequence belongs to the FGAMS family. As to quaternary structure, monomer. Part of the FGAM synthase complex composed of 1 PurL, 1 PurQ and 2 PurS subunits.

The protein localises to the cytoplasm. The enzyme catalyses N(2)-formyl-N(1)-(5-phospho-beta-D-ribosyl)glycinamide + L-glutamine + ATP + H2O = 2-formamido-N(1)-(5-O-phospho-beta-D-ribosyl)acetamidine + L-glutamate + ADP + phosphate + H(+). Its pathway is purine metabolism; IMP biosynthesis via de novo pathway; 5-amino-1-(5-phospho-D-ribosyl)imidazole from N(2)-formyl-N(1)-(5-phospho-D-ribosyl)glycinamide: step 1/2. Functionally, part of the phosphoribosylformylglycinamidine synthase complex involved in the purines biosynthetic pathway. Catalyzes the ATP-dependent conversion of formylglycinamide ribonucleotide (FGAR) and glutamine to yield formylglycinamidine ribonucleotide (FGAM) and glutamate. The FGAM synthase complex is composed of three subunits. PurQ produces an ammonia molecule by converting glutamine to glutamate. PurL transfers the ammonia molecule to FGAR to form FGAM in an ATP-dependent manner. PurS interacts with PurQ and PurL and is thought to assist in the transfer of the ammonia molecule from PurQ to PurL. This is Phosphoribosylformylglycinamidine synthase subunit PurL from Novosphingobium aromaticivorans (strain ATCC 700278 / DSM 12444 / CCUG 56034 / CIP 105152 / NBRC 16084 / F199).